Consider the following 1163-residue polypeptide: Leptin receptor (1163 aa).

Positions Met-1 to Ala-21 are cleaved as a signal peptide. Topologically, residues Phe-22–Asp-837 are extracellular. Residues Asn-23, Asn-41, Asn-56, Asn-71, Asn-79, Asn-96, and Asn-114 are each glycosylated (N-linked (GlcNAc...) asparagine). Intrachain disulfides connect Cys-37-Cys-88 and Cys-87-Cys-97. Disulfide bonds link Cys-129-Cys-140 and Cys-184-Cys-194. N-linked (GlcNAc...) asparagine glycosylation is found at Asn-185, Asn-204, Asn-274, Asn-345, and Asn-395. One can recognise a Fibronectin type-III 1 domain in the interval Pro-237 to Val-331. Disulfide bonds link Cys-350/Cys-410 and Cys-411/Cys-416. Asn-431 is a glycosylation site (N-linked (GlcNAc...) asparagine). 3 disulfide bridges follow: Cys-434/Cys-445, Cys-471/Cys-526, and Cys-486/Cys-496. The tract at residues Arg-465–Lys-482 is leptin-binding. Fibronectin type-III domains are found at residues Pro-537–Met-632, Pro-637–Ser-730, and Ile-738–Thr-831. The WSXWS motif signature appears at Trp-620–Ser-624. Residues Asn-622, Asn-657, Asn-668, Asn-686, Asn-695, Asn-726, and Asn-748 are each glycosylated (N-linked (GlcNAc...) asparagine). Residues Ala-838 to Ile-860 form a helical membrane-spanning segment. The Cytoplasmic portion of the chain corresponds to Leu-861–Val-1163. A Box 1 motif motif is present at residues Phe-869–Lys-877. Ser-880 carries the post-translational modification Phosphoserine. The segment at Glu-891–Leu-896 is required for JAK2 activation. The required for STAT3 phosphorylation stretch occupies residues Leu-896–Val-904. Phosphotyrosine; by JAK2 is present on Tyr-984. Tyr-1077 is subject to Phosphotyrosine. Tyr-1139 carries the post-translational modification Phosphotyrosine; by JAK2.

This sequence belongs to the type I cytokine receptor family. Type 2 subfamily. As to quaternary structure, present as a mixture of monomers and dimers. The phosphorylated receptor binds a number of SH2 domain-containing proteins such as JAK2, STAT3, PTPN11, and SOCS3. Interaction with SOCS3 inhibits JAK/STAT signaling and MAPK cascade. Post-translationally, on ligand binding, phosphorylated on two conserved C-terminal tyrosine residues (isoform B only) by JAK2. Tyr-984 is required for complete binding and activation of PTPN11, ERK/FOS activation and, for interaction with SOCS3. Phosphorylation on Tyr-1139 is required for STAT3 binding/activation. In terms of processing, on ligand binding, phosphorylated on two conserved C-terminal tyrosine residues (isoform B only) by JAK2. Tyr-984 is required for complete binding and activation of PTPN11, ERK/FOS activation,for interaction with SOCS3 and SOCS3 mediated inhibition of leptin signaling. Phosphorylation on Tyr-1139 is required for STAT3 binding/activation. Phosphorylation of Tyr-1077 has a more accessory role. Widely expressed. High expression of isoform B in liver, adipose tissue, hypothalamus and choroid plexus.

It localises to the cell membrane. The protein resides in the basolateral cell membrane. Receptor for hormone LEP/leptin. On ligand binding, mediates LEP central and peripheral effects through the activation of different signaling pathways such as JAK2/STAT3 and MAPK cascade/FOS. In the hypothalamus, LEP acts as an appetite-regulating factor that induces a decrease in food intake and an increase in energy consumption by inducing anorexinogenic factors and suppressing orexigenic neuropeptides, also regulates bone mass and secretion of hypothalamo-pituitary-adrenal hormones. In the periphery, increases basal metabolism, influences reproductive function, regulates pancreatic beta-cell function and insulin secretion, is pro-angiogenic and affects innate and adaptive immunity. Control of energy homeostasis and melanocortin production (stimulation of POMC and full repression of AgRP transcription) is mediated by STAT3 signaling, whereas distinct signals regulate NPY and the control of fertility, growth and glucose homeostasis. Involved in the regulation of counter-regulatory response to hypoglycemia by inhibiting neurons of the parabrachial nucleus. Has a specific effect on T lymphocyte responses, differentially regulating the proliferation of naive and memory T-cells. Leptin increases Th1 and suppresses Th2 cytokine production. Functionally, may transport LEP across the blood-brain barrier. Binds LEP and mediates LEP endocytosis. Does not induce phosphorylation of and activate STAT3. This Macaca mulatta (Rhesus macaque) protein is Leptin receptor (LEPR).